The primary structure comprises 206 residues: High frequency lysogenization protein HflD homolog (206 aa).

Belongs to the HflD family.

It is found in the cytoplasm. The protein resides in the cell inner membrane. The chain is High frequency lysogenization protein HflD homolog from Pseudomonas syringae pv. syringae (strain B728a).